The chain runs to 424 residues: WD-40 repeat-containing protein MSI3 (424 aa).

Residue Met-1 is modified to N-acetylmethionine. WD repeat units lie at residues 167–207, 216–256, 259–299, 303–343, and 362–402; these read GHEQ…TDKV, GHQS…MQHQ, VHER…APLH, KHEG…DEQL, and GHKA…YRED. The DWD box motif lies at 233 to 249; sequence IFGSAGDDCQLVIWDLR. The segment at 394 to 424 is disordered; that stretch reads MAESIYREDDEDEDDDDEGNQNAQHSNENQK. A compositionally biased stretch (acidic residues) spans 401-412; it reads EDDEDEDDDDEG. A compositionally biased stretch (polar residues) spans 413–424; that stretch reads NQNAQHSNENQK.

Belongs to the WD repeat RBAP46/RBAP48/MSI1 family.

Its subcellular location is the nucleus. Its function is as follows. Core histone-binding subunit that may target chromatin assembly factors, chromatin remodeling factors and histone deacetylases to their histone substrates in a manner that is regulated by nucleosomal DNA. The sequence is that of WD-40 repeat-containing protein MSI3 (MSI3) from Arabidopsis thaliana (Mouse-ear cress).